The following is a 450-amino-acid chain: ATP-dependent protease ATPase subunit HslU (450 aa).

Residues valine 29, 71–76, aspartate 261, glutamate 328, and arginine 400 contribute to the ATP site; that span reads GVGKTE.

Belongs to the ClpX chaperone family. HslU subfamily. In terms of assembly, a double ring-shaped homohexamer of HslV is capped on each side by a ring-shaped HslU homohexamer. The assembly of the HslU/HslV complex is dependent on binding of ATP.

Its subcellular location is the cytoplasm. ATPase subunit of a proteasome-like degradation complex; this subunit has chaperone activity. The binding of ATP and its subsequent hydrolysis by HslU are essential for unfolding of protein substrates subsequently hydrolyzed by HslV. HslU recognizes the N-terminal part of its protein substrates and unfolds these before they are guided to HslV for hydrolysis. The protein is ATP-dependent protease ATPase subunit HslU of Rickettsia canadensis (strain McKiel).